Consider the following 207-residue polypeptide: uncharacterized protein (207 aa).

Active-site residues include arginine 80, glutamate 88, and arginine 148.

Belongs to the thermonuclease family.

This is an uncharacterized protein from Methanocaldococcus jannaschii (strain ATCC 43067 / DSM 2661 / JAL-1 / JCM 10045 / NBRC 100440) (Methanococcus jannaschii).